The chain runs to 425 residues: Receptor-like protein 55 (425 aa).

The N-terminal stretch at 1–25 (MKPQQPQPPLLLLLLLPLLLTTVSS) is a signal peptide. At 26 to 397 (YPLNPKQLKA…EEEHKGSNKT (372 aa)) the chain is on the extracellular side. Asn40, Asn54, Asn79, and Asn132 each carry an N-linked (GlcNAc...) asparagine glycan. 7 LRR repeats span residues 144-169 (LKNL…ILGN), 170-193 (MHKL…SFHS), 195-216 (LRYI…ITRL), 217-240 (KNLK…IKSL), 242-264 (FLKN…LSSI), 265-287 (SELT…FFSE), and 288-313 (MKNL…SFIK). Residues Asn182, Asn202, Asn223, Asn245, Asn278, Asn308, and Asn329 are each glycosylated (N-linked (GlcNAc...) asparagine). The tract at residues 355-389 (PSQKEESLSGENDYDVEGGNEEKTENLKTKEEEEE) is disordered. Positions 374-389 (NEEKTENLKTKEEEEE) are enriched in basic and acidic residues. Asn395 is a glycosylation site (N-linked (GlcNAc...) asparagine). The chain crosses the membrane as a helical span at residues 398–418 (LFGLGIGLFSLVFLILFLFYL). The Cytoplasmic portion of the chain corresponds to 419–425 (AKRCRLI).

Belongs to the RLP family.

The protein resides in the cell membrane. Its function is as follows. Involved in plant defense. This Arabidopsis thaliana (Mouse-ear cress) protein is Receptor-like protein 55.